A 191-amino-acid polypeptide reads, in one-letter code: Fe/S biogenesis protein NfuA (191 aa).

2 residues coordinate [4Fe-4S] cluster: Cys149 and Cys152.

The protein belongs to the NfuA family. In terms of assembly, homodimer. It depends on [4Fe-4S] cluster as a cofactor.

Involved in iron-sulfur cluster biogenesis. Binds a 4Fe-4S cluster, can transfer this cluster to apoproteins, and thereby intervenes in the maturation of Fe/S proteins. Could also act as a scaffold/chaperone for damaged Fe/S proteins. This Pectobacterium carotovorum subsp. carotovorum (strain PC1) protein is Fe/S biogenesis protein NfuA.